The following is a 140-amino-acid chain: Large ribosomal subunit protein uL11 (140 aa).

This sequence belongs to the universal ribosomal protein uL11 family. As to quaternary structure, part of the ribosomal stalk of the 50S ribosomal subunit. Interacts with L10 and the large rRNA to form the base of the stalk. L10 forms an elongated spine to which L12 dimers bind in a sequential fashion forming a multimeric L10(L12)X complex. Post-translationally, one or more lysine residues are methylated.

Its function is as follows. Forms part of the ribosomal stalk which helps the ribosome interact with GTP-bound translation factors. This is Large ribosomal subunit protein uL11 from Heliobacterium modesticaldum (strain ATCC 51547 / Ice1).